The primary structure comprises 725 residues: Heme/hemopexin utilization protein C (725 aa).

Positions Met1–Ala21 are cleaved as a signal peptide. Residues Asp36–Pro147 enclose the TBDR plug domain. The TBDR beta-barrel domain occupies Lys158 to Phe725. Residues Ser708 to Phe725 carry the TonB C-terminal box motif.

Belongs to the TonB-dependent receptor family.

The protein resides in the cell outer membrane. In terms of biological role, required for utilization of free heme at low concentrations. The protein is Heme/hemopexin utilization protein C (hxuC) of Haemophilus influenzae.